The following is a 646-amino-acid chain: Tyrosine-protein kinase MasK (646 aa).

Residues 1 to 415 are Periplasmic-facing; it reads MSPPQTTLPV…PTAGGRRWRT (415 aa). In terms of domain architecture, Protein kinase spans 25 to 300; the sequence is YVLVRKLAEG…AFADALETFL (276 aa). ATP is bound by residues 31–39 and lysine 57; that span reads LAEGGMAEI. The active-site Proton acceptor is aspartate 163. The tract at residues 373 to 410 is disordered; the sequence is TSAQRPGMSMRPSSPGVPAHGAASRGSTSPESAPTAGG. The helical transmembrane segment at 416 to 433 threads the bilayer; the sequence is LAVGLAGGLMLAAAGIVG. The Cytoplasmic segment spans residues 434–646; the sequence is YRQWMTTPAS…VMPFSWRVTQ (213 aa). Positions 521-547 are disordered; the sequence is AGAASDVEAEADEEGADAAPVRSKKAS. The span at 527 to 536 shows a compositional bias: acidic residues; sequence VEAEADEEGA.

Belongs to the protein kinase superfamily. Tyr protein kinase family. As to quaternary structure, interacts with MglA. Post-translationally, autophosphorylated.

The protein localises to the cell inner membrane. The catalysed reaction is L-tyrosyl-[protein] + ATP = O-phospho-L-tyrosyl-[protein] + ADP + H(+). In terms of biological role, essential for growth. Interacts with MglA to control social gliding motility. The chain is Tyrosine-protein kinase MasK (masK) from Myxococcus xanthus (strain DK1622).